We begin with the raw amino-acid sequence, 129 residues long: Small ribosomal subunit protein uS8 (129 aa).

The protein belongs to the universal ribosomal protein uS8 family. Part of the 30S ribosomal subunit. Contacts proteins S5 and S12.

One of the primary rRNA binding proteins, it binds directly to 16S rRNA central domain where it helps coordinate assembly of the platform of the 30S subunit. In Dichelobacter nodosus (strain VCS1703A), this protein is Small ribosomal subunit protein uS8.